A 1032-amino-acid chain; its full sequence is Chitin synthase 8 (1032 aa).

2 stretches are compositionally biased toward pro residues: residues 1 to 11 (MRPGDIYPPPQ) and 26 to 41 (PPQPQPYPPQPYPPQQ). Residues 1–220 (MRPGDIYPPP…DDDMNDSHPL (220 aa)) are disordered. 3 stretches are compositionally biased toward polar residues: residues 65–78 (MSPTPQEPQGSRYN), 98–107 (LPTQSLSPFN), and 143–160 (TNPSHLPPQQQLTPSYSY). N-linked (GlcNAc...) asparagine glycosylation is present at Asn78. Over residues 176–188 (PHHSSQSSVSSIP) the composition is skewed to low complexity. Asn215, Asn304, Asn473, Asn545, and Asn691 each carry an N-linked (GlcNAc...) asparagine glycan. The next 7 membrane-spanning stretches (helical) occupy residues 728-748 (TLNMVFAWFALGNYYIAFFVL), 762-782 (VNIPLHYIYIALLLWCFLLSL), 796-816 (SMVGFALITIYMLFAAIFLAV), 842-862 (IVISLLATYGLYIISSLMALE), 870-890 (FFQYLLIAPSYINVLNVYAFC), 972-992 (VLLVWTMTNGALVAVILQASG), and 995-1015 (NSLATTYMGVLLYTVAGLAFF).

Belongs to the chitin synthase family.

Its subcellular location is the cell membrane. The enzyme catalyses [(1-&gt;4)-N-acetyl-beta-D-glucosaminyl](n) + UDP-N-acetyl-alpha-D-glucosamine = [(1-&gt;4)-N-acetyl-beta-D-glucosaminyl](n+1) + UDP + H(+). Functionally, polymerizes chitin, a structural polymer of the cell wall and septum, by transferring the sugar moiety of UDP-GlcNAc to the non-reducing end of the growing chitin polymer. This is Chitin synthase 8 from Cryptococcus neoformans var. grubii serotype A (strain H99 / ATCC 208821 / CBS 10515 / FGSC 9487) (Filobasidiella neoformans var. grubii).